Reading from the N-terminus, the 206-residue chain is LexA repressor (206 aa).

Residues 28–48 (RAEIARELGFRSANAAEEHLK) constitute a DNA-binding region (H-T-H motif). Residues Ser123 and Lys160 each act as for autocatalytic cleavage activity in the active site.

This sequence belongs to the peptidase S24 family. Homodimer.

It catalyses the reaction Hydrolysis of Ala-|-Gly bond in repressor LexA.. Its function is as follows. Represses a number of genes involved in the response to DNA damage (SOS response), including recA and lexA. In the presence of single-stranded DNA, RecA interacts with LexA causing an autocatalytic cleavage which disrupts the DNA-binding part of LexA, leading to derepression of the SOS regulon and eventually DNA repair. The chain is LexA repressor from Vibrio campbellii (strain ATCC BAA-1116).